Consider the following 349-residue polypeptide: Protein RecA (349 aa).

65–72 (GPESSGKT) provides a ligand contact to ATP. The interval 329–349 (FDGDVDENENEDDSPKTLFDE) is disordered. Residues 331 to 340 (GDVDENENED) show a composition bias toward acidic residues.

The protein belongs to the RecA family.

Its subcellular location is the cytoplasm. In terms of biological role, can catalyze the hydrolysis of ATP in the presence of single-stranded DNA, the ATP-dependent uptake of single-stranded DNA by duplex DNA, and the ATP-dependent hybridization of homologous single-stranded DNAs. It interacts with LexA causing its activation and leading to its autocatalytic cleavage. The sequence is that of Protein RecA from Staphylococcus epidermidis (strain ATCC 35984 / DSM 28319 / BCRC 17069 / CCUG 31568 / BM 3577 / RP62A).